Consider the following 361-residue polypeptide: Anhydro-N-acetylmuramic acid kinase (361 aa).

10–17 (GTSLDGVD) is a binding site for ATP.

This sequence belongs to the anhydro-N-acetylmuramic acid kinase family.

It catalyses the reaction 1,6-anhydro-N-acetyl-beta-muramate + ATP + H2O = N-acetyl-D-muramate 6-phosphate + ADP + H(+). Its pathway is amino-sugar metabolism; 1,6-anhydro-N-acetylmuramate degradation. It participates in cell wall biogenesis; peptidoglycan recycling. Catalyzes the specific phosphorylation of 1,6-anhydro-N-acetylmuramic acid (anhMurNAc) with the simultaneous cleavage of the 1,6-anhydro ring, generating MurNAc-6-P. Is required for the utilization of anhMurNAc either imported from the medium or derived from its own cell wall murein, and thus plays a role in cell wall recycling. In Gluconobacter oxydans (strain 621H) (Gluconobacter suboxydans), this protein is Anhydro-N-acetylmuramic acid kinase.